Here is a 330-residue protein sequence, read N- to C-terminus: Delta-aminolevulinic acid dehydratase (330 aa).

Zn(2+) is bound by residues Cys122, Cys124, His131, and Cys132. Lys199 acts as the Schiff-base intermediate with substrate in catalysis. At Lys199 the chain carries N6-succinyllysine. Arg209 is a binding site for 5-aminolevulinate. Position 215 is a phosphoserine (Ser215). A 5-aminolevulinate-binding site is contributed by Arg221. Cys223 contacts Zn(2+). Catalysis depends on Lys252, which acts as the Schiff-base intermediate with substrate. Lys252 carries the N6-succinyllysine modification. Ser279 contacts 5-aminolevulinate.

Belongs to the ALAD family. As to quaternary structure, homooctamer; active form. Homohexamer; low activity form. Zn(2+) serves as cofactor.

The protein resides in the cytoplasm. It localises to the cytosol. It catalyses the reaction 2 5-aminolevulinate = porphobilinogen + 2 H2O + H(+). It functions in the pathway porphyrin-containing compound metabolism; protoporphyrin-IX biosynthesis; coproporphyrinogen-III from 5-aminolevulinate: step 1/4. Can alternate between a fully active homooctamer and a low-activity homohexamer. A bound magnesium ion may promote the assembly of the fully active homooctamer. The magnesium-binding site is absent in the low-activity homohexamer. Inhibited by compounds that favor the hexameric state. Inhibited by divalent lead ions. The lead ions partially displace the zinc cofactor. Functionally, catalyzes an early step in the biosynthesis of tetrapyrroles. Binds two molecules of 5-aminolevulinate per subunit, each at a distinct site, and catalyzes their condensation to form porphobilinogen. This Pongo abelii (Sumatran orangutan) protein is Delta-aminolevulinic acid dehydratase (ALAD).